A 310-amino-acid chain; its full sequence is MRKTSSPRIAPSEITPRDLYHDRRRFMQAAAGAAAAALWPHWLSAGEKLPGVRKTDHVLPDALTPFEDVAHYNNFYEFGTDKETPSRTAGSLKTRPWTVSVEGEVQKPKLFDVDDLLKLAPLEERIYRLRCVEGWSMVVPWVGFPLAELIKRVEPTGNAKFVEFITLYDPARMPGQKSSVLDWPYREALRLDEAMHPLTLLVFGLYGEVLPNQNGAPVRVVVPWKYGFKSAKSIVRIRFVEQQPVSTWTRAVPSEYGFYANVNPQVDHPRWSQAKERRLGEFFKRPTLMFNGYAEQVAHLYAGMDLKKFF.

Residues 1 to 45 constitute a signal peptide (tat-type signal); that stretch reads MRKTSSPRIAPSEITPRDLYHDRRRFMQAAAGAAAAALWPHWLSA. Residues Asn-73, 76-77, Cys-131, Thr-166, Asn-214, Arg-219, and 230-232 contribute to the Mo-molybdopterin site; these read YE and SAK.

The protein belongs to the MsrP family. Heterodimer of a catalytic subunit (MsrP) and a heme-binding subunit (MsrQ). Requires Mo-molybdopterin as cofactor. In terms of processing, predicted to be exported by the Tat system. The position of the signal peptide cleavage has not been experimentally proven.

The protein resides in the periplasm. The catalysed reaction is L-methionyl-[protein] + a quinone + H2O = L-methionyl-(S)-S-oxide-[protein] + a quinol. It catalyses the reaction L-methionyl-[protein] + a quinone + H2O = L-methionyl-(R)-S-oxide-[protein] + a quinol. Part of the MsrPQ system that repairs oxidized periplasmic proteins containing methionine sulfoxide residues (Met-O), using respiratory chain electrons. Thus protects these proteins from oxidative-stress damage caused by reactive species of oxygen and chlorine generated by the host defense mechanisms. MsrPQ is essential for the maintenance of envelope integrity under bleach stress, rescuing a wide series of structurally unrelated periplasmic proteins from methionine oxidation. The catalytic subunit MsrP is non-stereospecific, being able to reduce both (R-) and (S-) diastereoisomers of methionine sulfoxide. The chain is Protein-methionine-sulfoxide reductase catalytic subunit MsrP from Methylococcus capsulatus (strain ATCC 33009 / NCIMB 11132 / Bath).